A 480-amino-acid polypeptide reads, in one-letter code: UDP-glucose 6-dehydrogenase 3 (480 aa).

Residues glycine 8–glycine 13, aspartate 33, arginine 38, valine 86–threonine 90, serine 127–threonine 128, and glutamate 161 each bind NAD(+). Substrate contacts are provided by residues glutamate 157–glutamate 161, lysine 216–leucine 223, and arginine 256–glycine 269. The active-site Nucleophile is the cysteine 272. Cysteine 272–lysine 275 contacts NAD(+). Phenylalanine 334 to lysine 335 contributes to the substrate binding site. NAD(+) is bound at residue arginine 342. Residue arginine 447 coordinates substrate.

This sequence belongs to the UDP-glucose/GDP-mannose dehydrogenase family.

It catalyses the reaction UDP-alpha-D-glucose + 2 NAD(+) + H2O = UDP-alpha-D-glucuronate + 2 NADH + 3 H(+). It participates in nucleotide-sugar biosynthesis; UDP-alpha-D-glucuronate biosynthesis; UDP-alpha-D-glucuronate from UDP-alpha-D-glucose: step 1/1. Its activity is regulated as follows. Inhibited by UDP-xylose. Functionally, involved in the biosynthesis of UDP-glucuronic acid (UDP-GlcA), providing nucleotide sugars for cell-wall polymers. Required for the formation of cell wall ingrowths on the outer cell walls of nematode-induced syncytia. The protein is UDP-glucose 6-dehydrogenase 3 (UGD3) of Arabidopsis thaliana (Mouse-ear cress).